The primary structure comprises 182 residues: Lipoprotein signal peptidase (182 aa).

Helical transmembrane passes span Leu15 to Ile35, Leu44 to Gly64, Ala65 to Ile85, and Pro97 to Val117. Active-site residues include Asp140 and Asp162. The chain crosses the membrane as a helical span at residues Trp155–Thr175.

Belongs to the peptidase A8 family.

The protein resides in the cell inner membrane. The catalysed reaction is Release of signal peptides from bacterial membrane prolipoproteins. Hydrolyzes -Xaa-Yaa-Zaa-|-(S,diacylglyceryl)Cys-, in which Xaa is hydrophobic (preferably Leu), and Yaa (Ala or Ser) and Zaa (Gly or Ala) have small, neutral side chains.. It participates in protein modification; lipoprotein biosynthesis (signal peptide cleavage). Functionally, this protein specifically catalyzes the removal of signal peptides from prolipoproteins. The protein is Lipoprotein signal peptidase of Leptospira borgpetersenii serovar Hardjo-bovis (strain L550).